A 375-amino-acid polypeptide reads, in one-letter code: Meiotic driver cw27 (375 aa).

Disordered regions lie at residues 1-42 and 74-103; these read MKNK…STLP and DYDE…GTTD. A compositionally biased stretch (basic and acidic residues) spans 11-29; the sequence is SMDELSTKNDNEIDLEKGP. 7 helical membrane passes run 108–128, 145–165, 172–192, 208–228, 245–265, 272–292, and 336–356; these read FLIK…PAVC, WTLI…SWCF, AVKV…ISLA, EMMI…FGCV, TISA…WTLW, LQVL…MSLF, and VIGF…NAIG.

Belongs to the WTF family. Homomer. Forms protein aggregates. The two isoforms can interact with each other and with themselves. High sequence similarity is required for their interaction.

The protein resides in the spore membrane. It localises to the vacuole. It is found in the membrane. Its subcellular location is the ascus epiplasm. The protein localises to the cytoplasm. The protein resides in the endoplasmic reticulum. Promotes unequal transmission of alleles from the parental zygote to progeny spores by acting as poison/antidote system where the poison and antidote proteins are produced from the same locus; the poison component is trans-acting and targets all spores within an ascus whereas the antidote component is spore-specific, leading to poisoning of all progeny that do not inherit the allele. In terms of biological role, localizes isoform 2 to the vacuole thereby facilitating its degradation. Functionally, forms toxic aggregates that disrupt spore maturation. In Schizosaccharomyces pombe (Fission yeast), this protein is Meiotic driver cw27.